The sequence spans 583 residues: ATP-dependent lipid A-core flippase (583 aa).

The next 5 membrane-spanning stretches (helical) occupy residues 27 to 47 (LAVA…MVSL), 69 to 89 (LLVF…TYCL), 142 to 162 (ALVS…LMFY), 165 to 185 (WQLS…IGFV), and 249 to 269 (AAAN…VLYL). An ABC transmembrane type-1 domain is found at 28–310 (AVAVVALIIN…LTNVTSQFQR (283 aa)). The region spanning 342-578 (VNVKDISFTY…DGAYAQLHRI (237 aa)) is the ABC transporter domain. Residue 376–383 (GRSGSGKS) participates in ATP binding.

The protein belongs to the ABC transporter superfamily. Lipid exporter (TC 3.A.1.106) family. Homodimer.

The protein resides in the cell inner membrane. The catalysed reaction is ATP + H2O + lipid A-core oligosaccharideSide 1 = ADP + phosphate + lipid A-core oligosaccharideSide 2.. Involved in lipopolysaccharide (LPS) biosynthesis. Translocates lipid A-core from the inner to the outer leaflet of the inner membrane. Transmembrane domains (TMD) form a pore in the inner membrane and the ATP-binding domain (NBD) is responsible for energy generation. This chain is ATP-dependent lipid A-core flippase, found in Vibrio vulnificus (strain YJ016).